The primary structure comprises 359 residues: ATPase ASNA1 homolog (359 aa).

Residue 23–30 (KGGVGKTT) participates in ATP binding. The active site involves aspartate 63. Glutamate 252 and asparagine 279 together coordinate ATP. Cysteine 291 and cysteine 294 together coordinate Zn(2+).

Belongs to the arsA ATPase family. Homodimer.

Its subcellular location is the cytoplasm. The protein resides in the endoplasmic reticulum. Functionally, ATPase required for the post-translational delivery of tail-anchored (TA) proteins to the endoplasmic reticulum. Recognizes and selectively binds the transmembrane domain of TA proteins in the cytosol. This complex then targets to the endoplasmic reticulum by membrane-bound receptors, where the tail-anchored protein is released for insertion. This process is regulated by ATP binding and hydrolysis. ATP binding drives the homodimer towards the closed dimer state, facilitating recognition of newly synthesized TA membrane proteins. ATP hydrolysis is required for insertion. Subsequently, the homodimer reverts towards the open dimer state, lowering its affinity for the membrane-bound receptor, and returning it to the cytosol to initiate a new round of targeting. The chain is ATPase ASNA1 homolog from Trypanosoma cruzi (strain CL Brener).